The following is a 1351-amino-acid chain: ABC transporter C family member 6 (1351 aa).

The 286-residue stretch at 112-397 (NKYALVSNLF…LPYDIFKAIG (286 aa)) folds into the ABC transmembrane type-1 1 domain. Transmembrane regions (helical) follow at residues 120–140 (LFII…INYI), 149–169 (SILK…GQSI), and 248–268 (LLCY…VIAL). The 227-residue stretch at 474–700 (NQDESINKKE…GIDFKSILKT (227 aa)) folds into the ABC transporter 1 domain. 510-517 (GVVGSGKT) is an ATP binding site. Residues 701-734 (KEIKKNVENETDSEELIKNEIEIENEIIDVNNAI) are a coiled coil. Helical transmembrane passes span 771–791 (GSSG…QAIF), 815–835 (IGYY…RILL), 904–924 (LISI…LSIA), 977–999 (MFDN…RWVS), 1002–1022 (LEVM…LFIS), and 1025–1045 (GLAA…SWGI). In terms of domain architecture, ABC transmembrane type-1 2 spans 777-1060 (LFITISLFFV…LEVKMNSFQR (284 aa)). The 236-residue stretch at 1101–1336 (IEFKNVEIKY…PNSKFNKLIK (236 aa)) folds into the ABC transporter 2 domain. 1135–1142 (GRTGAGKT) contacts ATP.

This sequence belongs to the ABC transporter superfamily. ABCC family. Conjugate transporter (TC 3.A.1.208) subfamily.

It is found in the membrane. The polypeptide is ABC transporter C family member 6 (abcC6) (Dictyostelium discoideum (Social amoeba)).